A 102-amino-acid polypeptide reads, in one-letter code: Large ribosomal subunit protein bL21 (102 aa).

Belongs to the bacterial ribosomal protein bL21 family. In terms of assembly, part of the 50S ribosomal subunit. Contacts protein L20.

In terms of biological role, this protein binds to 23S rRNA in the presence of protein L20. The polypeptide is Large ribosomal subunit protein bL21 (Pediococcus pentosaceus (strain ATCC 25745 / CCUG 21536 / LMG 10740 / 183-1w)).